A 206-amino-acid chain; its full sequence is uncharacterized protein (206 aa).

The YrdC-like domain occupies 14-200; sequence QRLINQAVEI…TPVVVREGVG (187 aa).

Belongs to the SUA5 family.

This is an uncharacterized protein from Escherichia coli O6:H1 (strain CFT073 / ATCC 700928 / UPEC).